The following is a 386-amino-acid chain: 1-deoxy-D-xylulose 5-phosphate reductoisomerase (386 aa).

6 residues coordinate NADPH: Thr-13, Gly-14, Ser-15, Ile-16, Asn-40, and Asn-122. Lys-123 lines the 1-deoxy-D-xylulose 5-phosphate pocket. NADPH is bound at residue Glu-124. Mn(2+) is bound at residue Asp-148. Positions 149, 150, 177, and 201 each coordinate 1-deoxy-D-xylulose 5-phosphate. Position 150 (Glu-150) interacts with Mn(2+). Gly-207 lines the NADPH pocket. Residues Ser-214, Asn-219, Lys-220, and Glu-223 each contribute to the 1-deoxy-D-xylulose 5-phosphate site. A Mn(2+)-binding site is contributed by Glu-223.

It belongs to the DXR family. Mg(2+) serves as cofactor. Requires Mn(2+) as cofactor.

The catalysed reaction is 2-C-methyl-D-erythritol 4-phosphate + NADP(+) = 1-deoxy-D-xylulose 5-phosphate + NADPH + H(+). The protein operates within isoprenoid biosynthesis; isopentenyl diphosphate biosynthesis via DXP pathway; isopentenyl diphosphate from 1-deoxy-D-xylulose 5-phosphate: step 1/6. In terms of biological role, catalyzes the NADPH-dependent rearrangement and reduction of 1-deoxy-D-xylulose-5-phosphate (DXP) to 2-C-methyl-D-erythritol 4-phosphate (MEP). This is 1-deoxy-D-xylulose 5-phosphate reductoisomerase from Francisella tularensis subsp. holarctica (strain OSU18).